Reading from the N-terminus, the 248-residue chain is uncharacterized protein (248 aa).

The helical transmembrane segment at 7–25 (TIFIGGIYGLGVYIGAVAW) threads the bilayer.

Belongs to the methyltransferase superfamily. METL family.

It localises to the mitochondrion inner membrane. Functionally, probable methyltransferase. This is an uncharacterized protein from Schizosaccharomyces pombe (strain 972 / ATCC 24843) (Fission yeast).